The following is a 380-amino-acid chain: SAM and SH3 domain-containing protein 3 (380 aa).

Disordered stretches follow at residues 1–76 (MLRR…GKKW) and 96–168 (LSEE…SPAP). A compositionally biased stretch (low complexity) spans 22 to 41 (LQRSSSFKDFAKSKPSSPVV). Phosphoserine occurs at positions 27, 34, and 42. T61 carries the post-translational modification Phosphothreonine. S97 carries the phosphoserine modification. T103 is subject to Phosphothreonine. S110 is subject to Phosphoserine. Phosphothreonine is present on T112. 2 positions are modified to phosphoserine: S113 and S120. The span at 141–150 (LSRQTSTGSE) shows a compositional bias: polar residues. An SH3 domain is found at 173–234 (PFCGRARVHT…KFIYVDVLPE (62 aa)). The 65-residue stretch at 252 to 316 (PKPKTLHELL…LTAAELLLDY (65 aa)) folds into the SAM domain. Position 318 is a phosphothreonine (T318). Residues 318 to 327 (TGSEEAEEGA) are compositionally biased toward acidic residues. A disordered region spans residues 318–380 (TGSEEAEEGA…LQGLSLSGAP (63 aa)). The residue at position 320 (S320) is a Phosphoserine. A compositionally biased stretch (polar residues) spans 369–380 (EQLQGLSLSGAP).

In terms of tissue distribution, preferentially expressed in lymphoid tissues. Expressed in bone marrow, thymus, spleen, lymph nodes and Peyer patches of gut. In the spleen and lymph nodes, expressed in both T- and B-cells. In the thymus, in the medulla and cortex.

Its function is as follows. May function as a signaling adapter protein in lymphocytes. The chain is SAM and SH3 domain-containing protein 3 (Sash3) from Mus musculus (Mouse).